Here is a 62-residue protein sequence, read N- to C-terminus: Large ribosomal subunit protein eL24 (62 aa).

Zn(2+) is bound by residues C6, C9, C32, and C36. The C4-type zinc finger occupies 6–36 (CSFCEGKIEPGCGKKYVKKDGSVMQFCSSKC).

This sequence belongs to the eukaryotic ribosomal protein eL24 family. As to quaternary structure, part of the 50S ribosomal subunit. Forms a cluster with proteins L3 and L14. Zn(2+) is required as a cofactor.

In terms of biological role, binds to the 23S rRNA. The protein is Large ribosomal subunit protein eL24 of Methanococcus vannielii (strain ATCC 35089 / DSM 1224 / JCM 13029 / OCM 148 / SB).